The primary structure comprises 288 residues: Phosphate import ATP-binding protein PstB (288 aa).

Positions 42–283 (IRDLNFYYEN…PKEKKTRDYI (242 aa)) constitute an ABC transporter domain. 74 to 81 (GPSGCGKS) provides a ligand contact to ATP.

Belongs to the ABC transporter superfamily. Phosphate importer (TC 3.A.1.7) family. The complex is composed of two ATP-binding proteins (PstB), two transmembrane proteins (PstC and PstA) and a solute-binding protein (PstS).

The protein resides in the cell membrane. It catalyses the reaction phosphate(out) + ATP + H2O = ADP + 2 phosphate(in) + H(+). Part of the ABC transporter complex PstSACB involved in phosphate import. Responsible for energy coupling to the transport system. The protein is Phosphate import ATP-binding protein PstB of Malacoplasma penetrans (strain HF-2) (Mycoplasma penetrans).